A 208-amino-acid chain; its full sequence is MEVNVLNIKGEDTGRKVTLNESIFGIEPNDHAIYLDVKQFMANQRQGTHKSKERSEISGSTRKLGRQKGGGGARRGDINSPVLVGGARVFGPKPRDYWFKLNKKVKTLARKSALSYKAQENAIIIVEDFTFEAPKTKDFVSMVNNLKIADKKLLLVLPEANKNVYLSARNIERANVAIASALNTYNVLNAETLVVTENSLKAIENILS.

Residues 44–79 are disordered; it reads QRQGTHKSKERSEISGSTRKLGRQKGGGGARRGDIN.

Belongs to the universal ribosomal protein uL4 family. In terms of assembly, part of the 50S ribosomal subunit.

Its function is as follows. One of the primary rRNA binding proteins, this protein initially binds near the 5'-end of the 23S rRNA. It is important during the early stages of 50S assembly. It makes multiple contacts with different domains of the 23S rRNA in the assembled 50S subunit and ribosome. Functionally, forms part of the polypeptide exit tunnel. The protein is Large ribosomal subunit protein uL4 of Phocaeicola vulgatus (strain ATCC 8482 / DSM 1447 / JCM 5826 / CCUG 4940 / NBRC 14291 / NCTC 11154) (Bacteroides vulgatus).